The chain runs to 247 residues: Large ribosomal subunit protein uL30 (247 aa).

This sequence belongs to the universal ribosomal protein uL30 family.

The polypeptide is Large ribosomal subunit protein uL30 (RPL7L1) (Sus scrofa (Pig)).